The following is a 292-amino-acid chain: MRIIKYLTILVISVVILTSCQSSSSQESTKSGEFRIVPTTVALTMTLDKLDLPIVGKPTSYKTLPNRYKDVPEIGQPMEPNVEAVKKLKPTHVLSVSTIKDEMQPFYKQLNMKGYFYDFDSLKGMQKSITQLGDQFNRKAQAKELNDHLNSVKQKIENKAAKQKKHPKVLILMGVPGSYLVATDKSYIGDLVKIAGGENVIKVKDRQYISSNTENLLNINPDIILRLPHGMPEEVKKMFQKEFKQNDIWKHFKAVKNNHVYDLEEVPFGITANVDADKAMTQLYDLFYKDKK.

The first 19 residues, 1-19 (MRIIKYLTILVISVVILTS), serve as a signal peptide directing secretion. Cysteine 20 carries the N-palmitoyl cysteine lipid modification. The S-diacylglycerol cysteine moiety is linked to residue cysteine 20. Residues 35–291 (RIVPTTVALT…QLYDLFYKDK (257 aa)) form the Fe/B12 periplasmic-binding domain. Heme-binding residues include valine 41, alanine 42, serine 60, tyrosine 61, methionine 78, and histidine 229.

The protein belongs to the bacterial solute-binding protein 8 family. Requires heme b as cofactor.

Its subcellular location is the cell membrane. Involved in heme (porphyrin) scavenging. Binds Fe(2+) and Fe(3+) heme but the largest fraction is Fe(2+) heme. Functions as a high-affinity heme binding protein and probably has a role in relaying heme-iron from cell wall-anchored isd proteins receptors to the probable permease IsdF. The chain is High-affinity heme uptake system protein IsdE (isdE) from Staphylococcus aureus (strain Mu3 / ATCC 700698).